Consider the following 634-residue polypeptide: 1-deoxy-D-xylulose-5-phosphate synthase (634 aa).

Thiamine diphosphate-binding positions include histidine 73 and 114–116 (GHS). Aspartate 145 is a Mg(2+) binding site. Thiamine diphosphate is bound by residues 146 to 147 (GS), asparagine 174, phenylalanine 285, and glutamate 367. Asparagine 174 is a Mg(2+) binding site.

It belongs to the transketolase family. DXPS subfamily. Homodimer. Requires Mg(2+) as cofactor. Thiamine diphosphate serves as cofactor.

It catalyses the reaction D-glyceraldehyde 3-phosphate + pyruvate + H(+) = 1-deoxy-D-xylulose 5-phosphate + CO2. It functions in the pathway metabolic intermediate biosynthesis; 1-deoxy-D-xylulose 5-phosphate biosynthesis; 1-deoxy-D-xylulose 5-phosphate from D-glyceraldehyde 3-phosphate and pyruvate: step 1/1. Catalyzes the acyloin condensation reaction between C atoms 2 and 3 of pyruvate and glyceraldehyde 3-phosphate to yield 1-deoxy-D-xylulose-5-phosphate (DXP). This chain is 1-deoxy-D-xylulose-5-phosphate synthase, found in Syntrophotalea carbinolica (strain DSM 2380 / NBRC 103641 / GraBd1) (Pelobacter carbinolicus).